Reading from the N-terminus, the 493-residue chain is Glutamate--tRNA ligase (493 aa).

The short motif at 10–20 (PSPTGDPHVGT) is the 'HIGH' region element. The 'KMSKS' region motif lies at 251–255 (KLSKR). Lys-254 contacts ATP.

This sequence belongs to the class-I aminoacyl-tRNA synthetase family. Glutamate--tRNA ligase type 1 subfamily. As to quaternary structure, monomer.

The protein localises to the cytoplasm. The catalysed reaction is tRNA(Glu) + L-glutamate + ATP = L-glutamyl-tRNA(Glu) + AMP + diphosphate. Its function is as follows. Catalyzes the attachment of glutamate to tRNA(Glu) in a two-step reaction: glutamate is first activated by ATP to form Glu-AMP and then transferred to the acceptor end of tRNA(Glu). The chain is Glutamate--tRNA ligase from Pseudomonas putida (strain GB-1).